The sequence spans 394 residues: Flap endonuclease 1 (394 aa).

Residues 1–104 (MGIKQLFSVI…GELAKRFQRK (104 aa)) form an N-domain region. Asp34 contributes to the Mg(2+) binding site. DNA contacts are provided by Arg47 and Arg70. Residues Asp86, Glu158, Glu160, Asp179, and Asp181 each coordinate Mg(2+). Residues 122-253 (DVEKFSRRTV…STALKLIREH (132 aa)) are I-domain. Glu158 contributes to the DNA binding site. 2 residues coordinate DNA: Gly231 and Asp233. Asp233 provides a ligand contact to Mg(2+). The segment at 341–349 (QQARIEGFF) is interaction with PCNA. Residues 356–383 (EEEKKAHKRKLEEQAEQKRKKVKEEKKE) show a composition bias toward basic and acidic residues. Residues 356–394 (EEEKKAHKRKLEEQAEQKRKKVKEEKKEKAKLKAKPRGA) form a disordered region. The segment covering 384 to 394 (KAKLKAKPRGA) has biased composition (basic residues).

This sequence belongs to the XPG/RAD2 endonuclease family. FEN1 subfamily. Interacts with PCNA. Three molecules of dnr-8/fen1 bind to one PCNA trimer with each molecule binding to one PCNA monomer. PCNA stimulates the nuclease activity without altering cleavage specificity. Mg(2+) serves as cofactor. Phosphorylated. Phosphorylation upon DNA damage induces relocalization to the nuclear plasma.

The protein localises to the nucleus. Its subcellular location is the nucleolus. It is found in the nucleoplasm. It localises to the mitochondrion. In terms of biological role, structure-specific nuclease with 5'-flap endonuclease and 5'-3' exonuclease activities involved in DNA replication and repair. During DNA replication, cleaves the 5'-overhanging flap structure that is generated by displacement synthesis when DNA polymerase encounters the 5'-end of a downstream Okazaki fragment. It enters the flap from the 5'-end and then tracks to cleave the flap base, leaving a nick for ligation. Also involved in the long patch base excision repair (LP-BER) pathway, by cleaving within the apurinic/apyrimidinic (AP) site-terminated flap. Acts as a genome stabilization factor that prevents flaps from equilibrating into structures that lead to duplications and deletions. Also possesses 5'-3' exonuclease activity on nicked or gapped double-stranded DNA, and exhibits RNase H activity. Also involved in replication and repair of rDNA and in repairing mitochondrial DNA. The sequence is that of Flap endonuclease 1 (dnr-8) from Neurospora crassa (strain ATCC 24698 / 74-OR23-1A / CBS 708.71 / DSM 1257 / FGSC 987).